The following is an 85-amino-acid chain: MEKLTVLILVATVLLMIQVLAQSGGDKHLKRRPKQYATKRLSALMRGHRQCTPQNVQCEEDDECCSNLECKCSTVPDCNFPKCRP.

The first 23 residues, 1–23 (MEKLTVLILVATVLLMIQVLAQS), serve as a signal peptide directing secretion. Residues 24–49 (GGDKHLKRRPKQYATKRLSALMRGHR) constitute a propeptide that is removed on maturation. Gln-50 is subject to Pyrrolidone carboxylic acid.

This sequence belongs to the conotoxin O2 superfamily. In terms of processing, contains 4 disulfide bonds. Expressed by the venom duct.

The protein localises to the secreted. This chain is Conotoxin Lv15a, found in Conus lividus (Livid cone).